The sequence spans 801 residues: Protocadherin beta-8 (801 aa).

An N-terminal signal peptide occupies residues 1 to 29 (MEASGKLICRQRQVLFSFLLLGLSLAGAA). Residues 30–691 (EPRSYSVVEE…GQADSLTVYL (662 aa)) are Extracellular-facing. 5 Cadherin domains span residues 36-134 (VVEE…SPVF), 139-243 (MLVK…APEF), 248-348 (YRVQ…APEV), 353-452 (FTSP…APAF), and 457-562 (YTLF…SPFV). C97 and C103 are joined by a disulfide. N419 and N437 each carry an N-linked (GlcNAc...) asparagine glycan. N568 carries N-linked (GlcNAc...) asparagine glycosylation. A Cadherin 6 domain is found at 569 to 672 (GSAPCTELVP…LVDGFSQPYL (104 aa)). The chain crosses the membrane as a helical span at residues 692–710 (VVALASVSSLFLFSVLLFV). Residues 711-801 (AVLLCRRSRA…NGFGFSLQLK (91 aa)) are Cytoplasmic-facing.

Forms homodimers in trans (molecules expressed by two different cells). Forms promiscuous heterodimers in cis (at the plasma membrane of the same cell) with other protocadherins.

It is found in the cell membrane. Calcium-dependent cell-adhesion protein involved in cells self-recognition and non-self discrimination. Thereby, it is involved in the establishment and maintenance of specific neuronal connections in the brain. This Homo sapiens (Human) protein is Protocadherin beta-8.